The chain runs to 123 residues: Angiogenin-2 (123 aa).

At Gln1 the chain carries Pyrrolidone carboxylic acid. The active-site Proton acceptor is His12. Intrachain disulfides connect Cys25–Cys80, Cys38–Cys91, and Cys56–Cys106. The short motif at 30–34 (ERRNM) is the Nucleolar localization signal element. Asn33 carries an N-linked (GlcNAc...) asparagine glycan. The Zn(2+) site is built by Asp40, His82, and His113. His113 serves as the catalytic Proton donor.

The protein belongs to the pancreatic ribonuclease family. As to expression, serum and milk.

Its subcellular location is the cytoplasmic vesicle. It is found in the secretory vesicle lumen. It localises to the secreted. The protein resides in the nucleus. The protein localises to the nucleolus. Divalent metal ions, such as Cu2+ and Zn2+, may inhibit the ribonucleolytic activity. Binds tightly to placental ribonuclease inhibitor and has very low ribonuclease activity. Has potent angiogenic activity. Angiogenin induces vascularization of normal and malignant tissues. Abolishes protein synthesis by specifically hydrolyzing cellular tRNAs. This is Angiogenin-2 from Bos taurus (Bovine).